We begin with the raw amino-acid sequence, 225 residues long: Agamous-like MADS-box protein MADS1 (225 aa).

In terms of tissue distribution, expressed in flowers and seeds.

Its subcellular location is the nucleus. Probable transcription factor involved in flower development. The chain is Agamous-like MADS-box protein MADS1 from Vitis vinifera (Grape).